The primary structure comprises 298 residues: Glutamyl-Q tRNA(Asp) synthetase (298 aa).

L-glutamate-binding positions include 9 to 13 (RFAPS) and glutamate 45. The 'HIGH' region motif lies at 12 to 22 (PSPSGELHFGS). Zn(2+)-binding residues include cysteine 101, cysteine 103, tyrosine 115, and cysteine 119. The L-glutamate site is built by tyrosine 172 and arginine 190. Positions 228 to 232 (KLSKQ) match the 'KMSKS' region motif. Residue lysine 231 participates in ATP binding.

This sequence belongs to the class-I aminoacyl-tRNA synthetase family. GluQ subfamily. Requires Zn(2+) as cofactor.

Its function is as follows. Catalyzes the tRNA-independent activation of glutamate in presence of ATP and the subsequent transfer of glutamate onto a tRNA(Asp). Glutamate is transferred on the 2-amino-5-(4,5-dihydroxy-2-cyclopenten-1-yl) moiety of the queuosine in the wobble position of the QUC anticodon. The polypeptide is Glutamyl-Q tRNA(Asp) synthetase (Salmonella choleraesuis (strain SC-B67)).